Consider the following 315-residue polypeptide: Calcium homeostasis modulator protein 6 (315 aa).

Over 1–21 (MEKFRAVLDLHVKHHSALGYG) the chain is Cytoplasmic. Residues 22–37 (LVTLLTAGGERIFSAV) form a helical membrane-spanning segment. The Extracellular portion of the chain corresponds to 38-46 (AFQCPCSAA). 3 disulfides stabilise this stretch: C41–C126, C43–C155, and C139–C146. A helical transmembrane segment spans residues 47–68 (WNLPYGLVFLLVPALALFLLGY). The Cytoplasmic portion of the chain corresponds to 69–102 (VLSARTWRLLTGCCSSARASCGSALRGSLVCTQI). Residues 103-127 (SAAAALAPLTWVAVALLGGAFYECA) traverse the membrane as a helical segment. Residues 128–169 (ATGSAAFAQRLCLGRNRSCAAELPLVPCNQAKASDVQDLLKD) are Extracellular-facing. Residues 170-192 (LKAQSQVLGWILIAVVIIILLIF) form a helical membrane-spanning segment. At 193 to 315 (TSVTRCLSPV…SSGINSTPEL (123 aa)) the chain is on the cytoplasmic side.

The protein belongs to the CALHM family. In terms of assembly, oligomerizes to form decameric and undecameric channels. In terms of processing, N-glycosylated. As to expression, placenta.

Its subcellular location is the cell membrane. The enzyme catalyses ATP(in) = ATP(out). Its function is as follows. Pore-forming subunit of an ATP-permeable channel. In response to pathogen-derived and proinflammatory stimuli, relocates from intracellular compartments to NK-dendritic cell and NK-macrophage immune synapses where it mediates ATP efflux and NK cell activation involved in antimicrobial and antitumor responses. May assemble to form gap junction channel-like structures with gating and ion conductance likely regulated by membrane lipids and voltage rather than by extracellular calcium levels. The sequence is that of Calcium homeostasis modulator protein 6 from Homo sapiens (Human).